The following is a 226-amino-acid chain: MKLLFLCALIALTAAAPRQKRLTVGTIAVSGGAGGSTGCVVTGNVLYANGFKLRELTPIEQQELQDYQNKVADYKATLKQAVKERQEKLKARLAGKKGKAVETSSEELPKAPKKPSFCSPDDTTQFYFDGCMVQNNRVYVGNTYARDLTPSEIEELKVFEKKQTVYQDYIQKQVQQQVSNLFGSSDFFSSFFGGGEAKQTTTTEAPELPEEAPEQPNVPNFCTPIY.

The first 15 residues, 1 to 15, serve as a signal peptide directing secretion; sequence MKLLFLCALIALTAA. Disordered regions lie at residues 95–116 and 196–218; these read GKKGKAVETSSEELPKAPKKPS and EAKQTTTTEAPELPEEAPEQPNV. Residues cysteine 131 and cysteine 222 are joined by a disulfide bond.

It belongs to the protease inhibitor I33 family.

The protein localises to the secreted. In terms of biological role, aspartyl protease inhibitor. This Parelaphostrongylus tenuis (Meningeal worm) protein is Aspartyl protease inhibitor.